A 307-amino-acid chain; its full sequence is Glutathione synthetase (307 aa).

The ATP-grasp domain maps to Lys-120 to Leu-304. Ala-146–Gly-202 contributes to the ATP binding site. Mg(2+)-binding residues include Glu-275 and Asn-277.

This sequence belongs to the prokaryotic GSH synthase family. Mg(2+) is required as a cofactor. The cofactor is Mn(2+).

The catalysed reaction is gamma-L-glutamyl-L-cysteine + glycine + ATP = glutathione + ADP + phosphate + H(+). Its pathway is sulfur metabolism; glutathione biosynthesis; glutathione from L-cysteine and L-glutamate: step 2/2. This Prochlorococcus marinus subsp. pastoris (strain CCMP1986 / NIES-2087 / MED4) protein is Glutathione synthetase.